Here is a 404-residue protein sequence, read N- to C-terminus: Magnesium transporter NIPA4 (404 aa).

Residues 1 to 55 (MELRVSNTSCENGSLLHLYCSSQEVLCQIVNDLSPEVPSNATFHSWQERIRQNYG) lie on the Extracellular side of the membrane. 3 N-linked (GlcNAc...) asparagine glycosylation sites follow: Asn-7, Asn-12, and Asn-40. The helical transmembrane segment at 56–76 (FYIGLGLAFLSSFLIGSSVIL) threads the bilayer. Over 77 to 102 (KKKGLLRLVATGATRAVDGGFGYLKD) the chain is Cytoplasmic. The helical transmembrane segment at 103 to 123 (AMWWAGFLTMAAGEVANFGAY) threads the bilayer. Residue Ala-124 is a topological domain, extracellular. Residues 125-145 (FAPATVVTPLGALSVLISAIL) traverse the membrane as a helical segment. Over 146–153 (SSYFLRES) the chain is Cytoplasmic. Residues 154–174 (LNLLGKLGCVICVAGSTVMVI) form a helical membrane-spanning segment. Over 175-195 (HAPEEEKVTTIMEMASKMKDT) the chain is Extracellular. The chain crosses the membrane as a helical span at residues 196–216 (GFIVFAVLLLVSCLILIFVIA). Residues 217-223 (PRYGQRN) lie on the Cytoplasmic side of the membrane. The helical transmembrane segment at 224-244 (ILIYIIICSVIGAFSVAAVKG) threads the bilayer. The Extracellular portion of the chain corresponds to 245–261 (LGITIKNFFQGLPVVRH). Residues 262–282 (PLPYILSLILALSLSTQVNFL) traverse the membrane as a helical segment. The Cytoplasmic portion of the chain corresponds to 283–293 (NRALDIFNTSL). A helical membrane pass occupies residues 294–314 (VFPIYYVFFTTVVVTSSIILF). Over 315-324 (KEWYSMSAVD) the chain is Extracellular. Residues 325-345 (IAGTLSGFVTIILGVFMLHAF) form a helical membrane-spanning segment. Residues 346–404 (KDLDISCASLPHMHKNPPPSPAPEPTVIRLEDKNVLVDNIELASTSSPEEKPKVFIIHS) lie on the Cytoplasmic side of the membrane.

It belongs to the NIPA family. In terms of tissue distribution, highly expressed in brain, lung, stomach, keratinocytes and leukocytes, and in all other tissues tested except liver, thyroid and fetal brain.

Its subcellular location is the cell membrane. It carries out the reaction Mg(2+)(in) = Mg(2+)(out). In terms of biological role, acts as a Mg(2+) transporter. Can also transport other divalent cations such as Ba(2+), Sr(2+) and Fe(2+) but to a much less extent than Mg(2+). May be a receptor for ligands (trioxilins A3 and B3) from the hepoxilin pathway. This is Magnesium transporter NIPA4 (NIPAL4) from Homo sapiens (Human).